The chain runs to 380 residues: Cystathionine gamma-synthase (380 aa).

N6-(pyridoxal phosphate)lysine is present on lysine 195.

This sequence belongs to the trans-sulfuration enzymes family. As to quaternary structure, homotetramer. Pyridoxal 5'-phosphate serves as cofactor.

It is found in the cytoplasm. The catalysed reaction is O-succinyl-L-homoserine + L-cysteine = L,L-cystathionine + succinate + H(+). Catalyzes the formation of L-cystathionine from O-succinyl-L-homoserine (OSHS) and L-cysteine, via a gamma-replacement reaction. In the absence of thiol, catalyzes gamma-elimination to form 2-oxobutanoate, succinate and ammonia. The sequence is that of Cystathionine gamma-synthase (metB) from Helicobacter pylori (strain J99 / ATCC 700824) (Campylobacter pylori J99).